Reading from the N-terminus, the 192-residue chain is UPF0301 protein BMA10247_1859 (192 aa).

Belongs to the UPF0301 (AlgH) family.

This chain is UPF0301 protein BMA10247_1859, found in Burkholderia mallei (strain NCTC 10247).